Here is a 334-residue protein sequence, read N- to C-terminus: Glycerol-3-phosphate dehydrogenase [NAD(P)+] (334 aa).

Positions 13, 33, and 106 each coordinate NADPH. Sn-glycerol 3-phosphate-binding residues include Lys-106, Gly-137, and Ser-139. Ala-141 lines the NADPH pocket. Lys-192, Asp-245, Ser-255, Arg-256, and Asn-257 together coordinate sn-glycerol 3-phosphate. Lys-192 acts as the Proton acceptor in catalysis. Arg-256 serves as a coordination point for NADPH. Val-280 and Glu-282 together coordinate NADPH.

It belongs to the NAD-dependent glycerol-3-phosphate dehydrogenase family.

The protein localises to the cytoplasm. It catalyses the reaction sn-glycerol 3-phosphate + NAD(+) = dihydroxyacetone phosphate + NADH + H(+). The enzyme catalyses sn-glycerol 3-phosphate + NADP(+) = dihydroxyacetone phosphate + NADPH + H(+). The protein operates within membrane lipid metabolism; glycerophospholipid metabolism. In terms of biological role, catalyzes the reduction of the glycolytic intermediate dihydroxyacetone phosphate (DHAP) to sn-glycerol 3-phosphate (G3P), the key precursor for phospholipid synthesis. The chain is Glycerol-3-phosphate dehydrogenase [NAD(P)+] from Chlamydia trachomatis serovar L2 (strain ATCC VR-902B / DSM 19102 / 434/Bu).